The chain runs to 427 residues: Serine protease HTRA2, mitochondrial (427 aa).

Positions 33–55 are disordered; it reads HTASSSKGSGGDNSKDKENNGQN. A helical transmembrane segment spans residues 66–86; that stretch reads SAFQFCVPFSLGALVSAVLIE. Positions 78-81 match the IAP-binding motif; that stretch reads ALVS. Residues 144–307 form a serine protease region; it reads SNGSGFVIEQ…IPIDYVKVFL (164 aa). Catalysis depends on charge relay system residues H162, D194, and S271. In terms of domain architecture, PDZ spans 330 to 415; it reads MGITMLTLTP…DLEIVILRGV (86 aa).

This sequence belongs to the peptidase S1C family. As to quaternary structure, interacts with th/DIAP1 (via BIR 2 domain).

It localises to the mitochondrion intermembrane space. The protein localises to the mitochondrion membrane. The enzyme catalyses Cleavage of non-polar aliphatic amino-acids at the P1 position, with a preference for Val, Ile and Met. At the P2 and P3 positions, Arg is selected most strongly with a secondary preference for other hydrophilic residues.. In terms of biological role, serine protease that shows proteolytic activity against a non-specific substrate beta-casein. Promotes or induces cell death either by direct binding to and inhibition of BIRC proteins (also called inhibitor of apoptosis proteins, IAPs), leading to an increase in caspase activity, or by a BIRC inhibition-independent, caspase-independent and serine protease activity-dependent mechanism. Can antagonize antiapoptotic activity of th/Diap1 by directly inducing the degradation of th/Diap1. The chain is Serine protease HTRA2, mitochondrial from Drosophila pseudoobscura pseudoobscura (Fruit fly).